The chain runs to 261 residues: Type III pantothenate kinase (261 aa).

Residue 6–13 (DAGNTNVV) coordinates ATP. A substrate-binding site is contributed by 108 to 111 (GADR). The active-site Proton acceptor is the Asp-110. Asp-130 provides a ligand contact to K(+). Thr-133 provides a ligand contact to ATP. Thr-185 contributes to the substrate binding site.

This sequence belongs to the type III pantothenate kinase family. As to quaternary structure, homodimer. NH4(+) serves as cofactor. K(+) is required as a cofactor.

It is found in the cytoplasm. It catalyses the reaction (R)-pantothenate + ATP = (R)-4'-phosphopantothenate + ADP + H(+). The protein operates within cofactor biosynthesis; coenzyme A biosynthesis; CoA from (R)-pantothenate: step 1/5. Catalyzes the phosphorylation of pantothenate (Pan), the first step in CoA biosynthesis. The sequence is that of Type III pantothenate kinase from Rhodospirillum centenum (strain ATCC 51521 / SW).